The sequence spans 238 residues: Citrate-binding protein (238 aa).

The first 31 residues, 1 to 31 (MKMKRSPYCFCCSFALLLLVSFLKDRHFCSA), serve as a signal peptide directing secretion. Residues 225–238 (LEGCNNNHGTWLVQ) constitute a propeptide, removed in mature form.

Its subcellular location is the vacuole. In terms of biological role, may be a subunit of a vacuolar malate and citrate transporter. This is Citrate-binding protein (CBP) from Hevea brasiliensis (Para rubber tree).